The chain runs to 507 residues: Microcystinase C (507 aa).

Residues methionine 1–glycine 21 form the signal peptide. Zn(2+) is bound by residues aspartate 167, histidine 169, and histidine 191.

Belongs to the peptidase M81 family. Requires Zn(2+) as cofactor.

With respect to regulation, inhibited by the metal chelators EDTA and 1,10-phenanthroline. Functionally, involved in peptidolytic degradation of cyclic heptapeptide hepatotoxin microcystin (MC). Cleaves both linear MC and the tetrapeptide degradation product of MC. Cleaves the Adda-Glu peptide bond of linear MC heptapeptides. The chain is Microcystinase C from Sphingomonas sp.